Here is a 119-residue protein sequence, read N- to C-terminus: Basic phospholipase A2 (119 aa).

Disulfide bonds link cysteine 11–cysteine 71, cysteine 27–cysteine 118, cysteine 29–cysteine 45, cysteine 44–cysteine 99, cysteine 51–cysteine 92, cysteine 60–cysteine 85, and cysteine 78–cysteine 90. Positions 28, 30, and 32 each coordinate Ca(2+). The active site involves histidine 48. Aspartate 49 is a binding site for Ca(2+). Aspartate 93 is a catalytic residue.

The protein belongs to the phospholipase A2 family. Group I subfamily. D49 sub-subfamily. The cofactor is Ca(2+). As to expression, expressed by the venom gland.

The protein resides in the secreted. The enzyme catalyses a 1,2-diacyl-sn-glycero-3-phosphocholine + H2O = a 1-acyl-sn-glycero-3-phosphocholine + a fatty acid + H(+). In terms of biological role, snake venom phospholipase A2 (PLA2) that has several activities. It is myotoxic, has weak anticoagulant activity and inhibits neuromuscular transmission by blocking acetylcholine release from the nerve termini. PLA2 catalyzes the calcium-dependent hydrolysis of the 2-acyl groups in 3-sn-phosphoglycerides. This is Basic phospholipase A2 from Hydrophis schistosus (Beaked sea snake).